The primary structure comprises 132 residues: Large-conductance mechanosensitive channel (132 aa).

2 consecutive transmembrane segments (helical) span residues 11–31 and 75–95; these read FISR…GAFG and GSFL…FLLV.

The protein belongs to the MscL family. In terms of assembly, homopentamer.

Its subcellular location is the cell inner membrane. Channel that opens in response to stretch forces in the membrane lipid bilayer. May participate in the regulation of osmotic pressure changes within the cell. This is Large-conductance mechanosensitive channel from Synechococcus sp. (strain JA-3-3Ab) (Cyanobacteria bacterium Yellowstone A-Prime).